The primary structure comprises 332 residues: L-lactate dehydrogenase A chain (332 aa).

Residues 29–57 (GMVG…MEDK) and Arg-99 each bind NAD(+). Residues Arg-106, Asn-138, and Arg-169 each contribute to the substrate site. Position 138 (Asn-138) interacts with NAD(+). The active-site Proton acceptor is His-193. Thr-248 lines the substrate pocket.

Belongs to the LDH/MDH superfamily. LDH family. As to quaternary structure, homotetramer.

It localises to the cytoplasm. It catalyses the reaction (S)-lactate + NAD(+) = pyruvate + NADH + H(+). It participates in fermentation; pyruvate fermentation to lactate; (S)-lactate from pyruvate: step 1/1. Functionally, interconverts simultaneously and stereospecifically pyruvate and lactate with concomitant interconversion of NADH and NAD(+). This is L-lactate dehydrogenase A chain (ldha) from Eleginops maclovinus (Patagonian blennie).